We begin with the raw amino-acid sequence, 105 residues long: Large ribosomal subunit protein eL36 (105 aa).

A disordered region spans residues 9–31 (VGLNKGHKVTKNVSKPRHSRRRR). Residues 13–31 (KGHKVTKNVSKPRHSRRRR) show a composition bias toward basic residues. An N6-acetyllysine modification is found at K62.

Belongs to the eukaryotic ribosomal protein eL36 family. In terms of assembly, component of the large ribosomal subunit.

Its subcellular location is the cytoplasm. It is found in the cytosol. Functionally, component of the large ribosomal subunit. The ribosome is a large ribonucleoprotein complex responsible for the synthesis of proteins in the cell. The sequence is that of Large ribosomal subunit protein eL36 (RPL36) from Oryctolagus cuniculus (Rabbit).